A 352-amino-acid polypeptide reads, in one-letter code: MEKDILIELKNVSKKYGENYVIKNLNLFVRRNEFLTFLGPSGCGKTTTLNMIAGFETPDEGNIIFEDSSINIVPPHKRQINTVFQKYALFSHMNVYENVAFGLRIKKLPEKQIREEVEKMLSLVDLKGFEKRSTDSLSGGQQQRVAIARALVNKPKLLLLDEPLGALDLKLRKEMQLELKNIQQKLGITFIFVTHDQEEALTMSDTIVVLNKGTVQQIGTPEDIYNEPKNKFVANFIGVSNILNGVMLHDYKVKFDDETFDCVDTGFNENEDVDVVVRPEDIKIVSKENGKLFGKVISAVFRGVHYEIKVEVKNTTWIIHNTKHVRVGDSIGLDILPDDIHIMRKEKIDEEA.

The ABC transporter domain maps to 7-237; sequence IELKNVSKKY…PKNKFVANFI (231 aa). Position 39 to 46 (39 to 46) interacts with ATP; it reads GPSGCGKT.

The protein belongs to the ABC transporter superfamily. Spermidine/putrescine importer (TC 3.A.1.11.1) family. In terms of assembly, the complex is composed of two ATP-binding proteins (PotA), two transmembrane proteins (PotB and PotC) and a solute-binding protein (PotD).

It is found in the cell membrane. The enzyme catalyses ATP + H2O + polyamine-[polyamine-binding protein]Side 1 = ADP + phosphate + polyamineSide 2 + [polyamine-binding protein]Side 1.. Part of the ABC transporter complex PotABCD involved in spermidine/putrescine import. Responsible for energy coupling to the transport system. The chain is Spermidine/putrescine import ATP-binding protein PotA from Clostridium acetobutylicum (strain ATCC 824 / DSM 792 / JCM 1419 / IAM 19013 / LMG 5710 / NBRC 13948 / NRRL B-527 / VKM B-1787 / 2291 / W).